Consider the following 143-residue polypeptide: CRISPR-associated endoribonuclease Cas2 (143 aa).

Asp14 lines the Mg(2+) pocket.

It belongs to the CRISPR-associated endoribonuclease Cas2 protein family. In terms of assembly, homodimer, forms a heterotetramer with a Cas1 homodimer. Mg(2+) is required as a cofactor.

Its function is as follows. CRISPR (clustered regularly interspaced short palindromic repeat), is an adaptive immune system that provides protection against mobile genetic elements (viruses, transposable elements and conjugative plasmids). CRISPR clusters contain sequences complementary to antecedent mobile elements and target invading nucleic acids. CRISPR clusters are transcribed and processed into CRISPR RNA (crRNA). Functions as a ssRNA-specific endoribonuclease. Involved in the integration of spacer DNA into the CRISPR cassette. The protein is CRISPR-associated endoribonuclease Cas2 of Campylobacter jejuni subsp. jejuni serotype O:2 (strain ATCC 700819 / NCTC 11168).